The sequence spans 467 residues: Solute carrier family 52, riboflavin transporter, member 3 (467 aa).

The Cytoplasmic segment spans residues 1–2; sequence MA. Residues 3–23 form a helical membrane-spanning segment; that stretch reads FLIHLLVCTFGMGSWVAINGL. At 24-43 the chain is on the extracellular side; the sequence is WVELPLLVTELPEGWYLPSY. Residues 44–64 form a helical membrane-spanning segment; it reads LTVIIQLANVGPLLVTLLHHF. The Cytoplasmic segment spans residues 65 to 71; that stretch reads RPGCLSE. A helical transmembrane segment spans residues 72-92; sequence VAVVFTVLGVGTIACTLFAFL. Residues 93–105 lie on the Extracellular side of the membrane; sequence WNVTSWVLGSRHS. N-linked (GlcNAc...) asparagine glycosylation occurs at Asn94. A helical transmembrane segment spans residues 106-126; sequence IAFLVLTFFLALVDCTSSVTF. Topologically, residues 127 to 137 are cytoplasmic; sequence LPFMSRLPTYY. The chain crosses the membrane as a helical span at residues 138–158; sequence LTTFFVGEGLSGLLPALVALA. Over 159–220 the chain is Extracellular; sequence QGSGLTTCVN…SRYLPANFSP (62 aa). The N-linked (GlcNAc...) asparagine glycan is linked to Asn168. The helical transmembrane segment at 221-241 threads the bilayer; it reads LVFFLLLSFMMACCFISFFFL. At 242-294 the chain is on the cytoplasmic side; the sequence is QRQPKRWEASIEDLLTSQVTLNSIRPQEGKDLGPPEESGKAQDPPEEKTAPQH. Ser251 carries the phosphoserine modification. Positions 266–288 are disordered; the sequence is RPQEGKDLGPPEESGKAQDPPEE. Over residues 268–288 the composition is skewed to basic and acidic residues; the sequence is QEGKDLGPPEESGKAQDPPEE. The helical transmembrane segment at 295-315 threads the bilayer; sequence LAHLTFIYVLVAFVNALTNGV. Residues 316–333 lie on the Extracellular side of the membrane; that stretch reads LPSVQTYSCLSYGPVAYH. The chain crosses the membrane as a helical span at residues 334-354; sequence LSATLSSMASPLTCFLSIFLP. The Cytoplasmic portion of the chain corresponds to 355–359; the sequence is NRSLP. A helical membrane pass occupies residues 360–380; that stretch reads FLGVLAVLGTSFGAYNMAMAV. Over 381–394 the chain is Extracellular; that stretch reads MSPCPFMQGHWGGE. A helical transmembrane segment spans residues 395–415; sequence VLIVVSWVLFTGCLSYVKVML. Residues 416 to 425 are Cytoplasmic-facing; it reads GVILRDHSRS. The helical transmembrane segment at 426–446 threads the bilayer; the sequence is ALLWCGAAVQLGSLLGAVVMF. The Extracellular portion of the chain corresponds to 447-467; it reads PLVNVLRLFSSADFCSLQCSA.

Belongs to the riboflavin transporter family.

It localises to the cell membrane. The enzyme catalyses riboflavin(in) = riboflavin(out). Plasma membrane transporter mediating the uptake by cells of the water soluble vitamin B2/riboflavin that plays a key role in biochemical oxidation-reduction reactions of the carbohydrate, lipid, and amino acid metabolism. In Bos taurus (Bovine), this protein is Solute carrier family 52, riboflavin transporter, member 3 (SLC52A3).